The chain runs to 290 residues: Thymidylate synthase (290 aa).

Position 31 (arginine 31) interacts with dUMP. A (6R)-5,10-methylene-5,6,7,8-tetrahydrofolate-binding site is contributed by histidine 61. 152 to 153 (RR) is a dUMP binding site. Catalysis depends on cysteine 172, which acts as the Nucleophile. DUMP is bound by residues 192 to 195 (RSAD), asparagine 203, and 233 to 235 (HIY). Aspartate 195 provides a ligand contact to (6R)-5,10-methylene-5,6,7,8-tetrahydrofolate. Residue alanine 289 participates in (6R)-5,10-methylene-5,6,7,8-tetrahydrofolate binding.

It belongs to the thymidylate synthase family. Bacterial-type ThyA subfamily. As to quaternary structure, homodimer.

The protein localises to the cytoplasm. The enzyme catalyses dUMP + (6R)-5,10-methylene-5,6,7,8-tetrahydrofolate = 7,8-dihydrofolate + dTMP. It functions in the pathway pyrimidine metabolism; dTTP biosynthesis. In terms of biological role, catalyzes the reductive methylation of 2'-deoxyuridine-5'-monophosphate (dUMP) to 2'-deoxythymidine-5'-monophosphate (dTMP) while utilizing 5,10-methylenetetrahydrofolate (mTHF) as the methyl donor and reductant in the reaction, yielding dihydrofolate (DHF) as a by-product. This enzymatic reaction provides an intracellular de novo source of dTMP, an essential precursor for DNA biosynthesis. The sequence is that of Thymidylate synthase from Psychrobacter cryohalolentis (strain ATCC BAA-1226 / DSM 17306 / VKM B-2378 / K5).